The sequence spans 554 residues: Glucose-6-phosphate isomerase (554 aa).

The active-site Proton donor is E359. Active-site residues include H390 and K518.

It belongs to the GPI family.

It is found in the cytoplasm. The enzyme catalyses alpha-D-glucose 6-phosphate = beta-D-fructose 6-phosphate. It functions in the pathway carbohydrate biosynthesis; gluconeogenesis. It participates in carbohydrate degradation; glycolysis; D-glyceraldehyde 3-phosphate and glycerone phosphate from D-glucose: step 2/4. In terms of biological role, catalyzes the reversible isomerization of glucose-6-phosphate to fructose-6-phosphate. In Pseudomonas fluorescens (strain Pf0-1), this protein is Glucose-6-phosphate isomerase.